The primary structure comprises 809 residues: Protein TOC75, chloroplastic (809 aa).

A compositionally biased stretch (polar residues) spans 1–17; that stretch reads MRTSVIPNRLTPTLTTH. The N-terminal 35 residues, 1-35, are a transit peptide targeting the chloroplast; sequence MRTSVIPNRLTPTLTTHPSRRRNDHITTRTSSLKC. The segment at 1–44 is disordered; that stretch reads MRTSVIPNRLTPTLTTHPSRRRNDHITTRTSSLKCHLSPSSGDN. Residues 36–131 constitute a chloroplast; outer membrane transit peptide; the sequence is HLSPSSGDNN…RILSPARAIA (96 aa). The Chloroplast intermembrane portion of the chain corresponds to 132–143; sequence DEPKSEDWDSHE. A beta stranded transmembrane segment spans residues 144-152; it reads LPADITVLL. At 153–160 the chain is on the cytoplasmic side; sequence GRLSGFKK. A beta stranded transmembrane segment spans residues 161-169; sequence YKISDILFF. Over 170–225 the chain is Chloroplast intermembrane; the sequence is DRNKKSKVETQDSFLDMVSLKPGGVYTKAQLQKELESLATCGMFEKVDMEGKTNAD. The beta stranded transmembrane segment at 226–234 threads the bilayer; sequence GSLGLTISF. The Cytoplasmic portion of the chain corresponds to 235-247; sequence AESMWERADRFRC. A beta stranded membrane pass occupies residues 248-254; that stretch reads INVGLMG. At 255–357 the chain is on the chloroplast intermembrane side; the sequence is QSKPVEMDPD…VVCEVVEGDI (103 aa). A beta stranded membrane pass occupies residues 358-365; the sequence is TKLSIQYL. The Cytoplasmic segment spans residues 366–410; sequence DKLGNVVEGNTEGPVVQRELPKQLLPGHTFNIEAGKQALRNINSL. Residues 411–418 traverse the membrane as a beta stranded segment; that stretch reads ALFSNIEV. The Chloroplast intermembrane segment spans residues 419 to 427; sequence NPRPDEMNE. A beta stranded membrane pass occupies residues 428–436; the sequence is GSIIVEIKL. Over 437–442 the chain is Cytoplasmic; it reads KELEQK. The chain crosses the membrane as a beta stranded span at residues 443–452; that stretch reads SAEVSTEWSI. At 453–464 the chain is on the chloroplast intermembrane side; sequence VPGRGGRPTLAS. A beta stranded transmembrane segment spans residues 465–473; the sequence is LQPGGTITF. Residues 474-500 lie on the Cytoplasmic side of the membrane; the sequence is EHRNLQGLNRSLTGSVTTSNFLNPQDD. The chain crosses the membrane as a beta stranded span at residues 501-509; the sequence is LAFKMEYAH. The Chloroplast intermembrane portion of the chain corresponds to 510 to 553; it reads PYLDGVDNPRNRTLRVSCFNSRKLSPVFTGGPGVDEVPSIWVDR. A beta stranded transmembrane segment spans residues 554-561; it reads AGVKANIT. At 562–569 the chain is on the cytoplasmic side; it reads ENFSRQSK. The beta stranded transmembrane segment at 570–577 threads the bilayer; the sequence is FTYGLVME. Residues 578–684 are Chloroplast intermembrane-facing; it reads EIITRDESNH…VEEGAGKSPP (107 aa). Residues 685–693 traverse the membrane as a beta stranded segment; it reads PVLVLHGHY. Residues 694–705 lie on the Cytoplasmic side of the membrane; sequence GGCVGDLPSYDA. The beta stranded transmembrane segment at 706–714 threads the bilayer; it reads FTLGGPYSV. Residues 715–776 are Chloroplast intermembrane-facing; that stretch reads RGYNMGEIGA…VYRRMGQGSS (62 aa). Residues 777-783 form a beta stranded membrane-spanning segment; it reads YGAGMKL. Over 784–797 the chain is Cytoplasmic; sequence GLVRAEYAVDHNSG. The beta stranded transmembrane segment at 798–805 threads the bilayer; sequence TGAVFFRF. Topologically, residues 806 to 809 are chloroplast intermembrane; sequence GERF.

Belongs to the TOC75 family. Part of the TOC core complex that includes a protein for the specific recognition of transit peptides surrounded by a ring composed of four proteins forming translocation channels, and four to five GTP-binding proteins providing energy. This core complex can interact with components of the TIC complex to form a larger import complex. Chloroplastic protein precursors such as prSS (precursor of the RuBisCO small subunit) also interact with these complexes. TOC75 interacts with OEP14, TOC34/OEP34, TOC86/OEP86, TIC55, TIC110/IEP110 and CLPC. Mostly expressed in young leaves, also present in old leaves, roots and stems (at protein level).

The protein localises to the plastid. The protein resides in the chloroplast outer membrane. Mediates the insertion of proteins targeted to the outer membrane of chloroplasts. Required for the import of protein precursors into chloroplasts. Forms the voltage-dependent preprotein translocation channels (hydrophilic beta barrel) of the TOC complex in the chloroplastic outer membrane. The narrowest inner diameter of this channel is approximately 14 Angstroms. This chain is Protein TOC75, chloroplastic (TOC75), found in Pisum sativum (Garden pea).